Consider the following 258-residue polypeptide: tRNA pseudouridine synthase A (258 aa).

Catalysis depends on Asp52, which acts as the Nucleophile. Substrate is bound at residue Tyr110.

It belongs to the tRNA pseudouridine synthase TruA family. As to quaternary structure, homodimer.

It carries out the reaction uridine(38/39/40) in tRNA = pseudouridine(38/39/40) in tRNA. Formation of pseudouridine at positions 38, 39 and 40 in the anticodon stem and loop of transfer RNAs. This chain is tRNA pseudouridine synthase A, found in Francisella tularensis subsp. holarctica (strain LVS).